The sequence spans 297 residues: N-acetylneuraminate lyase (297 aa).

Residues S47 and T48 each coordinate aceneuramate. Y137 (proton donor) is an active-site residue. Catalysis depends on K165, which acts as the Schiff-base intermediate with substrate. Aceneuramate contacts are provided by T167, G189, D191, E192, and S208.

It belongs to the DapA family. NanA subfamily. In terms of assembly, homotetramer.

The protein localises to the cytoplasm. It carries out the reaction aceneuramate = aldehydo-N-acetyl-D-mannosamine + pyruvate. Its pathway is amino-sugar metabolism; N-acetylneuraminate degradation; D-fructose 6-phosphate from N-acetylneuraminate: step 1/5. Functionally, catalyzes the reversible aldol cleavage of N-acetylneuraminic acid (sialic acid; Neu5Ac) to form pyruvate and N-acetylmannosamine (ManNAc) via a Schiff base intermediate. The chain is N-acetylneuraminate lyase from Salmonella paratyphi A (strain AKU_12601).